The sequence spans 157 residues: Protein Smg homolog (157 aa).

This sequence belongs to the Smg family.

The chain is Protein Smg homolog from Aeromonas hydrophila subsp. hydrophila (strain ATCC 7966 / DSM 30187 / BCRC 13018 / CCUG 14551 / JCM 1027 / KCTC 2358 / NCIMB 9240 / NCTC 8049).